We begin with the raw amino-acid sequence, 814 residues long: Leucine-rich repeat-containing protein 41 (814 aa).

Positions 45-54 are interaction with Elongin BC complex; that stretch reads ALFELCGRAV. S155, S276, and S326 each carry phosphoserine. Residues 265 to 408 form a disordered region; the sequence is LCGEASRGRA…KKGARTRQGC (144 aa). T327 carries the post-translational modification Phosphothreonine. Residues 354-385 are compositionally biased toward low complexity; that stretch reads TKRPPSAPATTSSASASSSTSSSKRAPASSAP. Residue S375 is modified to Phosphoserine. A compositionally biased stretch (basic residues) spans 389–403; sequence PLKRFKRAAGKKGAR. LRR repeat units lie at residues 489–509, 520–532, 533–557, 615–637, 638–661, 703–730, and 733–754; these read WVSL…IFRL, AGCR…LSDL, FSPL…VLSI, SGSL…FGLV, LQTL…LADC, NSTL…VFSE, and SSSL…LLEF.

Part of a E3 ubiquitin ligase complex with elongin BC complex (ELOB and ELOC), RBX1 and CUL5.

The chain is Leucine-rich repeat-containing protein 41 (LRRC41) from Bos taurus (Bovine).